The chain runs to 240 residues: Tumor protein p53-inducible nuclear protein 1 (240 aa).

The LIR signature appears at 25–37 (EKEDDEWILVDFI).

Interacts with p53/TP53 and HIPK2. Interacts with PRKCG, GABARAP, GABARAPL1, GABARAPL2, MAP1LC3A, MAP1LC3B and MAP1LC3C. As to expression, ubiquitously expressed.

It localises to the cytoplasm. The protein localises to the cytosol. It is found in the nucleus. Its subcellular location is the PML body. The protein resides in the cytoplasmic vesicle. It localises to the autophagosome. Antiproliferative and proapoptotic protein involved in cell stress response which acts as a dual regulator of transcription and autophagy. Acts as a positive regulator of autophagy. In response to cellular stress or activation of autophagy, relocates to autophagosomes where it interacts with autophagosome-associated proteins GABARAP, GABARAPL1/L2, MAP1LC3A/B/C and regulates autophagy. Acts as an antioxidant and plays a major role in p53/TP53-driven oxidative stress response. Possesses both a p53/TP53-independent intracellular reactive oxygen species (ROS) regulatory function and a p53/TP53-dependent transcription regulatory function. Positively regulates p53/TP53 and p73/TP73 and stimulates their capacity to induce apoptosis and regulate cell cycle. In response to double-strand DNA breaks, promotes p53/TP53 phosphorylation on 'Ser-46' and subsequent apoptosis. Acts as a tumor suppressor by inducing cell death by an autophagy and caspase-dependent mechanism. Can reduce cell migration by regulating the expression of SPARC. The polypeptide is Tumor protein p53-inducible nuclear protein 1 (TP53INP1) (Homo sapiens (Human)).